The primary structure comprises 56 residues: UPF0391 membrane protein Bd1438 (56 aa).

A run of 2 helical transmembrane segments spans residues 4-24 (AAIA…SGVA) and 33-53 (ILLF…LVSG).

Belongs to the UPF0391 family.

It localises to the cell membrane. The polypeptide is UPF0391 membrane protein Bd1438 (Bdellovibrio bacteriovorus (strain ATCC 15356 / DSM 50701 / NCIMB 9529 / HD100)).